The primary structure comprises 363 residues: SWIRM domain-containing protein YOR338W (363 aa).

2 disordered regions span residues 1–22 and 186–208; these read MLDN…GGIN and LYED…VPVR. Over residues 186–196 the composition is skewed to basic and acidic residues; that stretch reads LYEDDGNRSEN. Residues 266-363 enclose the SWIRM domain; the sequence is LKVEWKGSPM…LQDKHFEKYL (98 aa).

This is SWIRM domain-containing protein YOR338W from Saccharomyces cerevisiae (strain ATCC 204508 / S288c) (Baker's yeast).